Consider the following 394-residue polypeptide: Putative transporter AraJ (394 aa).

At 1–4 (MKKV) the chain is on the cytoplasmic side. A helical membrane pass occupies residues 5–27 (ILSLALGTFGLGMAEFGIMGVLT). Residues 28–41 (ELAHNVGISIPAAG) lie on the Periplasmic side of the membrane. Residues 42-63 (HMISYYALGVVVGAPIIALFSS) traverse the membrane as a helical segment. Over 64 to 69 (RYSLKH) the chain is Cytoplasmic. The chain crosses the membrane as a helical span at residues 70–89 (ILLFLVALCVIGNAMFTLSS). Topologically, residues 90–93 (SYLM) are periplasmic. The chain crosses the membrane as a helical span at residues 94-116 (LAIGRLVSGFPHGAFFGVGAIVL). The Cytoplasmic segment spans residues 117 to 128 (SKIIKPGKVTAA). Residues 129–151 (VAGMVSGMTVANLLGIPLGTYLS) form a helical membrane-spanning segment. Residues 152–155 (QEFS) lie on the Periplasmic side of the membrane. The helical transmembrane segment at 156-178 (WRYTFLLIAVFNIAVMASVYFWV) threads the bilayer. Residues 179 to 198 (PDIRDEAKGNLREQFHFLRS) are Cytoplasmic-facing. Residues 199 to 221 (PAPWLIFAATMFGNAGVFAWFSY) form a helical membrane-spanning segment. Residues 222–235 (VKPYMMFISGFSET) are Periplasmic-facing. A helical membrane pass occupies residues 236–255 (AMTFIMMLVGLGMVLGNMLS). Over 256-261 (GRISGR) the chain is Cytoplasmic. A helical transmembrane segment spans residues 262 to 284 (YSPLRIAAVTDFIIVLALLMLFF). Residues 285-293 (CGGMKTTSL) lie on the Periplasmic side of the membrane. Residues 294–316 (IFAFICCAGLFALSAPLQILLLQ) form a helical membrane-spanning segment. Residues 317-322 (NAKGGE) lie on the Cytoplasmic side of the membrane. A helical transmembrane segment spans residues 323-342 (LLGAAGGQIAFNLGSAVGAY). The Periplasmic segment spans residues 343 to 351 (CGGMMLTLG). Residues 352-374 (LAYNYVALPAALLSFAAMSSLLL) traverse the membrane as a helical segment. Residues 375 to 394 (YGRYKRQQAADTPVLAKPLG) lie on the Cytoplasmic side of the membrane.

Belongs to the major facilitator superfamily.

The protein resides in the cell inner membrane. In terms of biological role, may be involved in either the transport or processing of arabinose polymers. The sequence is that of Putative transporter AraJ (araJ) from Escherichia coli (strain K12).